Reading from the N-terminus, the 575-residue chain is Sclareol synthase, chloroplastic (575 aa).

The N-terminal 51 residues, 1-51, are a transit peptide targeting the chloroplast; sequence MSLAFNVGVTPFSGQRVGSRKEKFPVQGFPVTTPNRSRLIVNCSLTTIDFM. Mg(2+) is bound by residues Asp-329, Asp-333, Asn-473, Ser-477, and Glu-481. The DDXXD motif motif lies at 329-333; sequence DDFFD.

This sequence belongs to the terpene synthase family.

Its subcellular location is the plastid. It localises to the chloroplast. It catalyses the reaction 8-hydroxycopalyl diphosphate + H2O = sclareol + diphosphate. It functions in the pathway secondary metabolite biosynthesis; terpenoid biosynthesis. In terms of biological role, involved in the biosynthesis of labdane-type diterpenoid including sclareol, a diterpene-diol that is used as fragrance and flavoring, and has anticancer effects (able to kill leukemic and colon cancer cells by apoptosis). Sclareol can also be used as synthesis precursor of ambergris substitution fragance products such as ambrox. Terpene synthase that catalyzes the conversion of 8-hydroxy-copalyl diphosphate to sclareol. The polypeptide is Sclareol synthase, chloroplastic (Salvia sclarea (Clary sage)).